Reading from the N-terminus, the 373-residue chain is Peptide chain release factor 1-like, mitochondrial (373 aa).

The transit peptide at 1–13 (MRSGFLRSARRLW) directs the protein to the mitochondrion. Positions 56-111 (QLAAAARLLNEKERELRDTESLLHDENEDLKKLAESEIALCQKEIAELKHRIISLL) form a coiled coil. The tract at residues 229–293 (PKDLRIDTKR…LRARLYSMRL (65 aa)) is GGQ domain. Positions 243–245 (GGQ) match the GGQ motif. Gln-245 carries the N5-methylglutamine modification.

This sequence belongs to the prokaryotic/mitochondrial release factor family. Methylation of glutamine in the GGQ triplet by HEMK1 is conserved from bacteria to mammals.

It is found in the mitochondrion. Mitochondrial peptide chain release factor that directs the termination of translation in response to the peptide chain termination codons UAA and UAG. The polypeptide is Peptide chain release factor 1-like, mitochondrial (Mtrf1l) (Rattus norvegicus (Rat)).